The following is a 76-amino-acid chain: Large ribosomal subunit protein bL31 (76 aa).

It belongs to the bacterial ribosomal protein bL31 family. Type A subfamily. In terms of assembly, part of the 50S ribosomal subunit.

In terms of biological role, binds the 23S rRNA. The sequence is that of Large ribosomal subunit protein bL31 from Picosynechococcus sp. (strain ATCC 27264 / PCC 7002 / PR-6) (Agmenellum quadruplicatum).